The following is a 550-amino-acid chain: Cyclopentanone 1,2-monooxygenase (550 aa).

FAD is bound by residues 31 to 32, Asp51, Trp60, Asp71, Tyr77, and Val123; that span reads FT.

The protein belongs to the FAD-binding monooxygenase family. Homotetramer. The cofactor is FAD.

It carries out the reaction cyclopentanone + NADPH + O2 + H(+) = 5-valerolactone + NADP(+) + H2O. It participates in alcohol metabolism; cyclopentanol degradation; 5-valerolactone from cyclopentanol: step 2/2. Its function is as follows. Catalyzes a Baeyer-Villiger oxidation reaction, i.e. the insertion of an oxygen atom into a carbon-carbon bond adjacent to a carbonyl, which converts ketones to esters or lactones using NADPH as an electron donor. Converts cyclopentanone to 5-valerolactone, a step in the degradation pathway of cyclopentanol. Besides cycloalkanones, can also act on methylated and other alkylated cycloalkanones, and on methylated cycloalkenones, with high enantioselectivity in some cases. Cannot use NADH instead of NADPH. In Comamonas sp. (strain NCIMB 9872), this protein is Cyclopentanone 1,2-monooxygenase (cpnB).